We begin with the raw amino-acid sequence, 3433 residues long: Genome polyprotein (3433 aa).

The interaction with host EXOC1 stretch occupies residues 2-15; the sequence is SKKPGGPGKSRAVN. Topologically, residues 2–105 are cytoplasmic; it reads SKKPGGPGKS…NRRSSKQKKR (104 aa). The hydrophobic; homodimerization of capsid protein C stretch occupies residues 37 to 72; it reads LIDGRGPTRFVLALLAFFRFTAIAPTRAVLDRWRSV. A propeptide spans 106–123 (ER anchor for the capsid protein C, removed in mature form by serine protease NS3); it reads GGKTGIAFMIGLIAGVGA. A helical membrane pass occupies residues 106–126; it reads GGKTGIAFMIGLIAGVGAVTL. Topologically, residues 127–248 are extracellular; sequence SNFQGKVMMT…KATRYLVKTE (122 aa). N-linked (GlcNAc...) asparagine; by host glycosylation is present at Asn138. The chain crosses the membrane as a helical span at residues 249–269; the sequence is SWILRNPGYALVAAVIGWMLG. The Cytoplasmic portion of the chain corresponds to 270-273; that stretch reads SNTM. Residues 274–290 traverse the membrane as a helical segment; it reads QRVVFAVLLLLVAPAYS. Topologically, residues 291–743 are extracellular; that stretch reads FNCLGMSNRD…QVFGGAFRSL (453 aa). Intrachain disulfides connect Cys293–Cys320, Cys350–Cys406, Cys364–Cys395, and Cys382–Cys411. A fusion peptide region spans residues 388 to 401; the sequence is DRGWGNGCGLFGKG. An N-linked (GlcNAc...) asparagine; by host glycan is attached at Asn444. 2 disulfide bridges follow: Cys480–Cys578 and Cys595–Cys626. The chain crosses the membrane as a helical span at residues 744-764; it reads FGGMSWITQGLLGALLLWMGI. The Cytoplasmic portion of the chain corresponds to 765–770; the sequence is NARDRS. A helical transmembrane segment spans residues 771 to 791; it reads IALTFLAVGGVLLFLSVNVHA. Residues 792–1216 lie on the Extracellular side of the membrane; it reads DTGCAIDISR…AFAESNSGGD (425 aa). 2 cysteine pairs are disulfide-bonded: Cys795–Cys806 and Cys846–Cys934. N-linked (GlcNAc...) asparagine; by host glycans are attached at residues Asn921, Asn966, and Asn998. 4 disulfides stabilise this stretch: Cys970-Cys1014, Cys1071-Cys1120, Cys1082-Cys1103, and Cys1104-Cys1107. The helical transmembrane segment at 1217 to 1237 threads the bilayer; that stretch reads VVHLALMATFKIQPVFMVASF. Residues 1238-1247 are Cytoplasmic-facing; sequence LKARWTNQEN. Residues 1248-1268 traverse the membrane as a helical segment; it reads ILLMLAAAFFQMAYYDARQIL. The Lumenal segment spans residues 1269 to 1288; it reads LWEMPDVLNSLAVAWMILRA. The helical transmembrane segment at 1289-1309 threads the bilayer; it reads ITFTTTSNVVVPLLALLTPGL. Topologically, residues 1310–1316 are cytoplasmic; the sequence is RCLNLDV. The chain crosses the membrane as a helical span at residues 1317–1335; it reads YRILLLMVGIGSLIREKRS. Residues 1336–1345 are Lumenal-facing; the sequence is AAAKKKGASL. Residues 1346 to 1366 form a helical membrane-spanning segment; that stretch reads LCLALASTGFFNPMILAAGLV. Topologically, residues 1367–1375 are cytoplasmic; sequence ACDPNRKRG. Residues 1376–1396 form a helical membrane-spanning segment; sequence WPATEVMTAVGLMFAIVGGLA. Topologically, residues 1397–1399 are lumenal; sequence ELD. Residues 1400 to 1420 form a helical membrane-spanning segment; sequence IDSMAIPMTIAGLMFAAFVIS. Over 1421-1477 the chain is Cytoplasmic; sequence GKSTDMWIERTADISWEGDAEITGSSERVDVRLDDDGNFQLMNDPGAPWKIWMLRMA. An interacts with and activates NS3 protease region spans residues 1428 to 1467; it reads IERTADISWEGDAEITGSSERVDVRLDDDGNFQLMNDPGA. Positions 1478 to 1498 form an intramembrane region, helical; sequence CLAISAYTPWAILPSVVGFWI. Over 1499-2174 the chain is Cytoplasmic; sequence TLQYTKRGGV…RMALEELPDA (676 aa). In terms of domain architecture, Peptidase S7 spans 1506–1683; it reads GGVLWDTPSP…ERMDEPVPAG (178 aa). Active-site charge relay system; for serine protease NS3 activity residues include His1556, Asp1580, and Ser1640. The Helicase ATP-binding domain maps to 1686-1842; sequence PEMLRKKQIT…ESNAPISDLQ (157 aa). Positions 1690 to 1693 are important for RNA-binding; the sequence is RKKQ. Residue 1699–1706 participates in ATP binding; it reads LHPGAGKT. A DEAH box motif is present at residues 1790 to 1793; that stretch reads DEAH. Residues 1853–2018 enclose the Helicase C-terminal domain; it reads GYEWITEYIG…GLIAQFYQPE (166 aa). Lys1894 carries the post-translational modification N6-acetyllysine; by host. A regulates the ATPase activity of NS3 helicase region spans residues 2169 to 2173; it reads EELPD. The helical transmembrane segment at 2175–2195 threads the bilayer; that stretch reads LQTIALIALLSVMTMGVFFLL. At 2196-2200 the chain is on the lumenal side; it reads MQRKG. Residues 2201-2221 constitute an intramembrane region (helical); that stretch reads IGKIGLGGVVLGAATFFCWMA. A topological domain (lumenal) is located at residue Glu2222. The helical transmembrane segment at 2223 to 2243 threads the bilayer; the sequence is VPGTKIAGMLLLSLLLMIVLI. Topologically, residues 2244–2258 are cytoplasmic; it reads PEPEKQRSQTDNQLA. Residues 2259-2273 form a helical membrane-spanning segment; sequence VFLICVLTLVGAVAA. Residues 2274–2312 lie on the Lumenal side of the membrane; it reads NEMGWLDKTKSDISGLFGQRIETKENFSIGEFLLDLRPA. An intramembrane region (helical) is located at residues 2313–2333; it reads TAWSLYAVTTAVLTPLLKHLI. The Lumenal segment spans residues 2334-2380; it reads TSDYITTSLTSINVQASALFTLARGFPFVDVGVSALLLAAGCWGQVT. Residues 2381–2401 traverse the membrane as a helical segment; it reads LTVTVTSATLLFCHYAYMVPG. The Cytoplasmic segment spans residues 2402-2444; the sequence is WQAEAMRSAQRRTAAGIMKNAVVDGIVATDVPELERTTPIMQK. A helical membrane pass occupies residues 2445 to 2465; that stretch reads KVGQVMLILVSLAALVVNPSV. Residues 2466-2470 are Lumenal-facing; it reads KTVRE. Residues 2471–2491 form a helical membrane-spanning segment; the sequence is AGILITAAAVTLWENGASSVW. Residues 2492 to 3433 are Cytoplasmic-facing; that stretch reads NATTAIGLCH…DTTLVEDTVL (942 aa). Residues 2529–2794 enclose the mRNA cap 0-1 NS5-type MT domain; sequence GGAKGRTLGE…DVNLGSGTRA (266 aa). Ser2584 lines the S-adenosyl-L-methionine pocket. Ser2584 bears the Phosphoserine mark. The active-site For 2'-O-MTase activity is the Lys2589. 6 residues coordinate S-adenosyl-L-methionine: Gly2614, Trp2615, Thr2632, Lys2633, Asp2659, and Val2660. Catalysis depends on Asp2674, which acts as the For 2'-O-MTase activity. Ile2675 is an S-adenosyl-L-methionine binding site. Active-site for 2'-O-MTase activity residues include Lys2710 and Glu2746. Residue Tyr2748 coordinates S-adenosyl-L-methionine. A Nuclear localization signal motif is present at residues 2917-2919; sequence REK. Residues Glu2968, His2972, Cys2977, and Cys2980 each contribute to the Zn(2+) site. Residues 3058–3210 form the RdRp catalytic domain; sequence GRIYADDTAG…KPLDDRFATS (153 aa). Zn(2+) contacts are provided by His3245, Cys3261, and Cys3380. The PDZ-binding signature appears at 3431-3433; the sequence is TVL.

The protein in the N-terminal section; belongs to the class I-like SAM-binding methyltransferase superfamily. mRNA cap 0-1 NS5-type methyltransferase family. Homodimer; further assembles as a homotetramer. Interacts (via N-terminus) with host EXOC1 (via C-terminus); this interaction results in EXOC1 degradation through the proteasome degradation pathway. In terms of assembly, forms heterodimers with envelope protein E in the endoplasmic reticulum and Golgi. As to quaternary structure, homodimer; in the endoplasmic reticulum and Golgi. Interacts with protein prM. Interacts with non-structural protein 1. Homodimer; Homohexamer when secreted. Interacts with envelope protein E. NS1 interacts with NS4B. Interacts with host complement protein CFH; this interaction leads to the degradation of C3. In terms of assembly, interacts (via N-terminus) with serine protease NS3. As to quaternary structure, forms a heterodimer with serine protease NS3. May form homooligomers. Forms a heterodimer with NS2B. Interacts with non-structural protein 2A (via N-terminus). Interacts with NS4B. Interacts with unphosphorylated RNA-directed RNA polymerase NS5; this interaction stimulates RNA-directed RNA polymerase NS5 guanylyltransferase activity. In terms of assembly, interacts with Serine protease/Helicase NS3. Interacts with NS1. As to quaternary structure, homodimer. Interacts with host STAT2; this interaction inhibits the phosphorylation of the latter, and, when all viral proteins are present (polyprotein), targets STAT2 for degradation. Interacts with serine protease NS3. Specific enzymatic cleavages in vivo yield mature proteins. Cleavages in the lumen of endoplasmic reticulum are performed by host signal peptidase, whereas cleavages in the cytoplasmic side are performed by serine protease NS3. Signal cleavage at the 2K-4B site requires a prior NS3 protease-mediated cleavage at the 4A-2K site. Post-translationally, cleaved in post-Golgi vesicles by a host furin, releasing the mature small envelope protein M, and peptide pr. This cleavage is incomplete as up to 30% of viral particles still carry uncleaved prM. In terms of processing, N-glycosylated. N-glycosylated. The excreted form is glycosylated and this is required for efficient secretion of the protein from infected cells. Post-translationally, acetylated by host KAT5. Acetylation modulates NS3 RNA-binding and unwinding activities and plays an important positive role for viral replication. In terms of processing, phosphorylated on serines residues. This phosphorylation may trigger NS5 nuclear localization.

The protein resides in the virion. It is found in the host nucleus. It localises to the host cytoplasm. Its subcellular location is the host perinuclear region. The protein localises to the secreted. The protein resides in the virion membrane. It is found in the host endoplasmic reticulum membrane. It catalyses the reaction Selective hydrolysis of -Xaa-Xaa-|-Yaa- bonds in which each of the Xaa can be either Arg or Lys and Yaa can be either Ser or Ala.. It carries out the reaction RNA(n) + a ribonucleoside 5'-triphosphate = RNA(n+1) + diphosphate. The catalysed reaction is a ribonucleoside 5'-triphosphate + H2O = a ribonucleoside 5'-diphosphate + phosphate + H(+). The enzyme catalyses ATP + H2O = ADP + phosphate + H(+). It catalyses the reaction a 5'-end (5'-triphosphoguanosine)-ribonucleoside in mRNA + S-adenosyl-L-methionine = a 5'-end (N(7)-methyl 5'-triphosphoguanosine)-ribonucleoside in mRNA + S-adenosyl-L-homocysteine. It carries out the reaction a 5'-end (N(7)-methyl 5'-triphosphoguanosine)-ribonucleoside in mRNA + S-adenosyl-L-methionine = a 5'-end (N(7)-methyl 5'-triphosphoguanosine)-(2'-O-methyl-ribonucleoside) in mRNA + S-adenosyl-L-homocysteine + H(+). Plays a role in virus budding by binding to the cell membrane and gathering the viral RNA into a nucleocapsid that forms the core of a mature virus particle. During virus entry, may induce genome penetration into the host cytoplasm after hemifusion induced by the surface proteins. Can migrate to the cell nucleus where it modulates host functions. Overcomes the anti-viral effects of host EXOC1 by sequestering and degrading the latter through the proteasome degradation pathway. Functionally, inhibits RNA silencing by interfering with host Dicer. In terms of biological role, prevents premature fusion activity of envelope proteins in trans-Golgi by binding to envelope protein E at pH6.0. After virion release in extracellular space, gets dissociated from E dimers. Its function is as follows. Acts as a chaperone for envelope protein E during intracellular virion assembly by masking and inactivating envelope protein E fusion peptide. prM is the only viral peptide matured by host furin in the trans-Golgi network probably to avoid catastrophic activation of the viral fusion activity in acidic Golgi compartment prior to virion release. prM-E cleavage is inefficient, and many virions are only partially matured. These uncleaved prM would play a role in immune evasion. May play a role in virus budding. Exerts cytotoxic effects by activating a mitochondrial apoptotic pathway through M ectodomain. May display a viroporin activity. Functionally, binds to host cell surface receptor and mediates fusion between viral and cellular membranes. Envelope protein is synthesized in the endoplasmic reticulum in the form of heterodimer with protein prM. They play a role in virion budding in the ER, and the newly formed immature particle is covered with 60 spikes composed of heterodimer between precursor prM and envelope protein E. The virion is transported to the Golgi apparatus where the low pH causes dissociation of PrM-E heterodimers and formation of E homodimers. prM-E cleavage is inefficient, and many virions are only partially matured. These uncleaved prM would play a role in immune evasion. In terms of biological role, involved in immune evasion, pathogenesis and viral replication. Once cleaved off the polyprotein, is targeted to three destinations: the viral replication cycle, the plasma membrane and the extracellular compartment. Essential for viral replication. Required for formation of the replication complex and recruitment of other non-structural proteins to the ER-derived membrane structures. Excreted as a hexameric lipoparticle that plays a role against host immune response. Antagonizing the complement function. Binds to the host macrophages and dendritic cells. Inhibits signal transduction originating from Toll-like receptor 3 (TLR3). Its function is as follows. Component of the viral RNA replication complex that functions in virion assembly and antagonizes the host alpha/beta interferon antiviral response. Inhibits STAT2 translocation in the nucleus after IFN-alpha treatment. Required cofactor for the serine protease function of NS3. May have membrane-destabilizing activity and form viroporins. Inhibits STAT2 translocation in the nucleus after IFN-alpha treatment. Functionally, displays three enzymatic activities: serine protease, NTPase and RNA helicase. NS3 serine protease, in association with NS2B, performs its autocleavage and cleaves the polyprotein at dibasic sites in the cytoplasm: C-prM, NS2A-NS2B, NS2B-NS3, NS3-NS4A, NS4A-2K and NS4B-NS5. NS3 RNA helicase binds RNA and unwinds dsRNA in the 3' to 5' direction. NS3 supports the separation of RNA daughter and template strands during viral replication. The helicase part is involved in the inhibition of phosphorylation of host STAT1, and thereby inhibition of host type-I IFN signaling. In addition, NS3 assists the initiation of replication by unwinding the RNA secondary structure in the 3' non-translated region (NTR). Inhibits STAT2 translocation in the nucleus after IFN-alpha treatment. In terms of biological role, regulates the ATPase activity of the NS3 helicase activity. NS4A allows NS3 helicase to conserve energy during unwinding. Induces host ER membrane rearrangements to provide a compartment where viral replication can take part. Inhibits STAT2 translocation in the nucleus after IFN-alpha treatment. Its function is as follows. Functions as a signal peptide for NS4B and is required for the interferon antagonism activity of the latter. Induces the formation of ER-derived membrane vesicles where the viral replication takes place. Inhibits interferon (IFN)-induced host STAT1 phosphorylation and nuclear translocation, thereby preventing the establishment of cellular antiviral state by blocking the IFN-alpha/beta pathway. Inhibits STAT2 translocation in the nucleus after IFN-alpha treatment. Functionally, replicates the viral (+) and (-) genome, and performs the capping of genomes in the cytoplasm. NS5 methylates viral RNA cap at guanine N-7 and ribose 2'-O positions. Besides its role in genome replication, also prevents the establishment of cellular antiviral state by blocking the interferon-alpha/beta (IFN-alpha/beta) signaling pathway. Inhibits host JAK1 and TYK2 phosphorylation, thereby preventing activation of JAK-STAT signaling pathway. May transcriptionally regulate host genes involved in antiviral response when localized in the nucleus. The sequence is that of Genome polyprotein from Ciconiiformes (storks and others).